The following is a 366-amino-acid chain: tRNA/tmRNA (uracil-C(5))-methyltransferase (366 aa).

S-adenosyl-L-methionine contacts are provided by Gln-190, Tyr-218, Asn-223, Glu-239, and Asp-299. Cys-324 functions as the Nucleophile in the catalytic mechanism. The Proton acceptor role is filled by Glu-358.

Belongs to the class I-like SAM-binding methyltransferase superfamily. RNA M5U methyltransferase family. TrmA subfamily.

It catalyses the reaction uridine(54) in tRNA + S-adenosyl-L-methionine = 5-methyluridine(54) in tRNA + S-adenosyl-L-homocysteine + H(+). The enzyme catalyses uridine(341) in tmRNA + S-adenosyl-L-methionine = 5-methyluridine(341) in tmRNA + S-adenosyl-L-homocysteine + H(+). In terms of biological role, dual-specificity methyltransferase that catalyzes the formation of 5-methyluridine at position 54 (m5U54) in all tRNAs, and that of position 341 (m5U341) in tmRNA (transfer-mRNA). In Salmonella paratyphi A (strain ATCC 9150 / SARB42), this protein is tRNA/tmRNA (uracil-C(5))-methyltransferase.